The primary structure comprises 339 residues: Probable cytosolic iron-sulfur protein assembly protein CIAO1 (339 aa).

WD repeat units lie at residues 14 to 53 (HPDS…WICK), 59 to 98 (GHQR…FECV), 103 to 142 (GHEN…EYEC), 148 to 187 (SHTQ…WVCC), 192 to 231 (GHES…NEQG), 250 to 289 (FHTR…DPQQ), and 301 to 339 (AHSQ…PAGL). The LYR motif; required for interaction with HSC20 signature appears at 176–178 (LYQ).

It belongs to the WD repeat CIA1 family. Component of the CIA complex. Interacts with CIAO2A and forms a complex with CIAO2B and MMS19; the interactions with CIAO2A and CIAO2B are mutually exclusive. Interacts with CHD1L, ERCC2, IREB2 and POLD1. Component of the MMXD complex, which includes CIAO1, ERCC2, CIAO2B, MMS19 and SLC25A5. Interacts with WT1. Interacts with CIAO3. Interacts (via LYR motif) with HSC20.

The protein localises to the cytoplasm. Its function is as follows. Key component of the cytosolic iron-sulfur protein assembly (CIA) complex, a multiprotein complex that mediates the incorporation of iron-sulfur cluster into extramitochondrial Fe/S proteins. As a CIA complex component, interacts specifically with CIAO2A or CIAO2B and MMS19 to assist different branches of iron-sulfur protein assembly, depending of its interactors. The complex CIAO1:CIAO2B:MMS19 binds to and facilitates the assembly of most cytosolic-nuclear Fe/S proteins. CIAO1:CIAO2A specifically matures ACO1 and stabilizes IREB2. Seems to specifically modulate the transactivation activity of WT1. As part of the mitotic spindle-associated MMXD complex it may play a role in chromosome segregation. The chain is Probable cytosolic iron-sulfur protein assembly protein CIAO1 from Rattus norvegicus (Rat).